A 166-amino-acid chain; its full sequence is Large ribosomal subunit protein uL10 (166 aa).

Belongs to the universal ribosomal protein uL10 family. As to quaternary structure, part of the ribosomal stalk of the 50S ribosomal subunit. The N-terminus interacts with L11 and the large rRNA to form the base of the stalk. The C-terminus forms an elongated spine to which L12 dimers bind in a sequential fashion forming a multimeric L10(L12)X complex.

Functionally, forms part of the ribosomal stalk, playing a central role in the interaction of the ribosome with GTP-bound translation factors. This chain is Large ribosomal subunit protein uL10, found in Aeromonas salmonicida (strain A449).